The chain runs to 301 residues: MIITVNSPIASRLDKYLRRLYPLLTQGVIEKALRQKQIIVNSKKAEASLRVVEGDEIFIHDKFNLPIAQPTKLVFTDAEITLAKKITTEYLIYEDDNIIAINKPAGLATQGGSKINLSVDSALKYLNSQGADFKLVHRLDKETSGLLLIAKNYVSSVKLHDAFKEKLVEKTYLAVTYGKPIKDQGEVKTNIEKSKGSIPKITDINDNNGKLAITYYKLLKSLTNNLFLVEFIPITGRMHQLRLHAKLLGCPIFGDNKYGNDKLMPYSKYMFLHANNIVLSKKVFGKEVNLEAKLPSYFNRV.

The region spanning 11 to 70 (SRLDKYLRRLYPLLTQGVIEKALRQKQIIVNSKKAEASLRVVEGDEIFIHDKFNLPIAQP) is the S4 RNA-binding domain. The active site involves Asp-140.

This sequence belongs to the pseudouridine synthase RluA family.

It carries out the reaction uridine(955/2504/2580) in 23S rRNA = pseudouridine(955/2504/2580) in 23S rRNA. Responsible for synthesis of pseudouridine from uracil at positions 955, 2504 and 2580 in 23S ribosomal RNA. This is Ribosomal large subunit pseudouridine synthase C (rluC) from Rickettsia bellii (strain RML369-C).